Consider the following 120-residue polypeptide: Glycophorin-A (120 aa).

Q1 bears the Pyrrolidone carboxylic acid mark. Residues 1–40 are disordered; sequence QTIATGSPPIAGTSDLSTITSAATPTFTTEQDGREQGDGL. Residues T2 and T5 are each glycosylated (O-linked (GalNAc...) threonine). S7 carries O-linked (GalNAc...) serine glycosylation. T13 carries O-linked (GalNAc...) threonine glycosylation. O-linked (GalNAc...) serine glycosylation occurs at S17. Positions 17-29 are enriched in low complexity; sequence STITSAATPTFTT. 2 O-linked (GalNAc...) threonine glycosylation sites follow: T18 and T20. S21 carries an O-linked (GalNAc...) serine glycan. O-linked (GalNAc...) threonine glycosylation is found at T24 and T28. The helical transmembrane segment at 50-72 threads the bilayer; sequence VITVIILGVMAGIIGIILLLAYV. The segment at 78 to 120 is disordered; that stretch reads KRPPADVPPPASTVPSADAPPPVSEDDETSLTSVETDYPGDSQ. A compositionally biased stretch (pro residues) spans 82-100; the sequence is ADVPPPASTVPSADAPPPV. Residues 107–120 show a composition bias toward polar residues; that stretch reads SLTSVETDYPGDSQ. Phosphoserine is present on S119.

It belongs to the glycophorin-A family. As to quaternary structure, homodimer.

It localises to the membrane. Its function is as follows. Glycophorin A is the major intrinsic membrane sialoglycoprotein of the erythrocyte. Appears to be important for the function of SLC4A1 and is required for high activity of SLC4A1. May be involved in translocation of SLC4A1 to the plasma membrane. The sequence is that of Glycophorin-A from Equus caballus (Horse).